We begin with the raw amino-acid sequence, 178 residues long: Small ribosomal subunit protein uS4 (178 aa).

Residues Arg-104–His-166 form the S4 RNA-binding domain. Residues Pro-157 to Gln-178 form a disordered region.

It belongs to the universal ribosomal protein uS4 family. As to quaternary structure, part of the 30S ribosomal subunit. Contacts protein S5. The interaction surface between S4 and S5 is involved in control of translational fidelity.

One of the primary rRNA binding proteins, it binds directly to 16S rRNA where it nucleates assembly of the body of the 30S subunit. Its function is as follows. With S5 and S12 plays an important role in translational accuracy. The sequence is that of Small ribosomal subunit protein uS4 from Methanococcus maripaludis (strain C7 / ATCC BAA-1331).